Reading from the N-terminus, the 276-residue chain is Dermonecrotic toxin LlSicTox-alphaIV2iv (276 aa).

His5 is an active-site residue. Residues Glu25 and Asp27 each coordinate Mg(2+). His41 (nucleophile) is an active-site residue. Cystine bridges form between Cys45–Cys51 and Cys47–Cys193. Asp85 contacts Mg(2+).

Belongs to the arthropod phospholipase D family. Class II subfamily. The cofactor is Mg(2+). In terms of tissue distribution, expressed by the venom gland.

Its subcellular location is the secreted. The catalysed reaction is an N-(acyl)-sphingosylphosphocholine = an N-(acyl)-sphingosyl-1,3-cyclic phosphate + choline. The enzyme catalyses an N-(acyl)-sphingosylphosphoethanolamine = an N-(acyl)-sphingosyl-1,3-cyclic phosphate + ethanolamine. It catalyses the reaction a 1-acyl-sn-glycero-3-phosphocholine = a 1-acyl-sn-glycero-2,3-cyclic phosphate + choline. It carries out the reaction a 1-acyl-sn-glycero-3-phosphoethanolamine = a 1-acyl-sn-glycero-2,3-cyclic phosphate + ethanolamine. Its function is as follows. Dermonecrotic toxins cleave the phosphodiester linkage between the phosphate and headgroup of certain phospholipids (sphingolipid and lysolipid substrates), forming an alcohol (often choline) and a cyclic phosphate. This toxin acts on sphingomyelin (SM). It may also act on ceramide phosphoethanolamine (CPE), lysophosphatidylcholine (LPC) and lysophosphatidylethanolamine (LPE), but not on lysophosphatidylserine (LPS), and lysophosphatidylglycerol (LPG). It acts by transphosphatidylation, releasing exclusively cyclic phosphate products as second products. Induces dermonecrosis, hemolysis, increased vascular permeability, edema, inflammatory response, and platelet aggregation. The chain is Dermonecrotic toxin LlSicTox-alphaIV2iv from Loxosceles laeta (South American recluse spider).